The primary structure comprises 449 residues: GTPase Der (449 aa).

EngA-type G domains follow at residues 3 to 167 and 178 to 351; these read AVIA…PTSE and PRIA…IDSR. GTP is bound by residues 9–16, 56–60, 119–122, 184–191, 231–235, and 296–299; these read GRPNVGKS, DTGGF, NKMD, DTAGM, and NKWD. Residues 352–436 form the KH-like domain; sequence RHFSTAELNR…PLRLVFRQGE (85 aa).

This sequence belongs to the TRAFAC class TrmE-Era-EngA-EngB-Septin-like GTPase superfamily. EngA (Der) GTPase family. As to quaternary structure, associates with the 50S ribosomal subunit.

GTPase that plays an essential role in the late steps of ribosome biogenesis. The protein is GTPase Der of Acidithiobacillus ferrooxidans (strain ATCC 23270 / DSM 14882 / CIP 104768 / NCIMB 8455) (Ferrobacillus ferrooxidans (strain ATCC 23270)).